Reading from the N-terminus, the 170-residue chain is Acireductone dioxygenase (170 aa).

Residues His-99, His-101, Glu-105, and His-144 each coordinate Fe(2+). His-99, His-101, Glu-105, and His-144 together coordinate Ni(2+).

It belongs to the acireductone dioxygenase (ARD) family. As to quaternary structure, monomer. The cofactor is Fe(2+). It depends on Ni(2+) as a cofactor.

It carries out the reaction 1,2-dihydroxy-5-(methylsulfanyl)pent-1-en-3-one + O2 = 3-(methylsulfanyl)propanoate + CO + formate + 2 H(+). The catalysed reaction is 1,2-dihydroxy-5-(methylsulfanyl)pent-1-en-3-one + O2 = 4-methylsulfanyl-2-oxobutanoate + formate + 2 H(+). It functions in the pathway amino-acid biosynthesis; L-methionine biosynthesis via salvage pathway; L-methionine from S-methyl-5-thio-alpha-D-ribose 1-phosphate: step 5/6. Functionally, catalyzes 2 different reactions between oxygen and the acireductone 1,2-dihydroxy-3-keto-5-methylthiopentene (DHK-MTPene) depending upon the metal bound in the active site. Fe-containing acireductone dioxygenase (Fe-ARD) produces formate and 2-keto-4-methylthiobutyrate (KMTB), the alpha-ketoacid precursor of methionine in the methionine recycle pathway. Ni-containing acireductone dioxygenase (Ni-ARD) produces methylthiopropionate, carbon monoxide and formate, and does not lie on the methionine recycle pathway. The protein is Acireductone dioxygenase of Bacillus cytotoxicus (strain DSM 22905 / CIP 110041 / 391-98 / NVH 391-98).